Consider the following 326-residue polypeptide: Lipoyl synthase (326 aa).

Residues Cys-68, Cys-73, Cys-79, Cys-94, Cys-98, Cys-101, and Ser-308 each contribute to the [4Fe-4S] cluster site. In terms of domain architecture, Radical SAM core spans 80–297 (FNHGTATFMI…KDVAMGLGFS (218 aa)).

This sequence belongs to the radical SAM superfamily. Lipoyl synthase family. [4Fe-4S] cluster is required as a cofactor.

The protein localises to the cytoplasm. The enzyme catalyses [[Fe-S] cluster scaffold protein carrying a second [4Fe-4S](2+) cluster] + N(6)-octanoyl-L-lysyl-[protein] + 2 oxidized [2Fe-2S]-[ferredoxin] + 2 S-adenosyl-L-methionine + 4 H(+) = [[Fe-S] cluster scaffold protein] + N(6)-[(R)-dihydrolipoyl]-L-lysyl-[protein] + 4 Fe(3+) + 2 hydrogen sulfide + 2 5'-deoxyadenosine + 2 L-methionine + 2 reduced [2Fe-2S]-[ferredoxin]. Its pathway is protein modification; protein lipoylation via endogenous pathway; protein N(6)-(lipoyl)lysine from octanoyl-[acyl-carrier-protein]: step 2/2. Its function is as follows. Catalyzes the radical-mediated insertion of two sulfur atoms into the C-6 and C-8 positions of the octanoyl moiety bound to the lipoyl domains of lipoate-dependent enzymes, thereby converting the octanoylated domains into lipoylated derivatives. This chain is Lipoyl synthase, found in Aeromonas salmonicida (strain A449).